A 1447-amino-acid polypeptide reads, in one-letter code: Adhesion G protein-coupled receptor L3 (1447 aa).

The N-terminal stretch at 1 to 19 is a signal peptide; sequence MWPSQLLIFMMLLAPIIHA. Residues 20–862 are Extracellular-facing; that stretch reads FSRAPIPMAV…VKHSDAVHDL (843 aa). Residues 35 to 124 enclose the SUEL-type lectin domain; it reads SCESYPIELR…KYLEVQYECV (90 aa). Cystine bridges form between Cys36–Cys66, Cys45–Cys123, Cys78–Cys110, Cys91–Cys97, and Cys135–Cys317. A glycan (N-linked (GlcNAc...) asparagine) is linked at Asn93. Residues 134–393 enclose the Olfactomedin-like domain; sequence LCPGLLKGVY…VVKYSLDFGP (260 aa). The segment at 249–279 is interaction with FLRT3; that stretch reads YHDTSPYRWGGKSDIDLAVDENGLWVIYATE. Residues Asp264, Asn312, Ala313, and Val367 each contribute to the Ca(2+) site. Residues 426–473 form a disordered region; that stretch reads DISTTGPLGMGSTTTSTTLRTTTLSPGRSTTPSVSGRRNRSTSTPSPA. Low complexity predominate over residues 428–458; sequence STTGPLGMGSTTTSTTLRTTTLSPGRSTTPS. N-linked (GlcNAc...) asparagine glycosylation is found at Asn464, Asn549, Asn746, Asn759, Asn804, and Asn830. In terms of domain architecture, GAIN-B spans 675–854; sequence DIVRENTDNI…AVLMAHVEVK (180 aa). Disulfide bonds link Cys805–Cys836 and Cys824–Cys838. The GPS stretch occupies residues 805–854; that stretch reads CSFWSYSKRTMTGYWSTQGCRLLTTNKTHTTCSCNHLTNFAVLMAHVEVK. A stachel region spans residues 842–855; it reads TNFAVLMAHVEVKH. A helical membrane pass occupies residues 863 to 888; it reads LLDVITWVGILLSLVCLLICIFTFCF. Residues 889 to 896 are Cytoplasmic-facing; the sequence is FRGLQSDR. The chain crosses the membrane as a helical span at residues 897 to 918; the sequence is NTIHKNLCISLFVAELLFLIGI. The Extracellular segment spans residues 919-926; that stretch reads NRTDQPIA. The chain crosses the membrane as a helical span at residues 927-950; it reads CAVFAALLHFFFLAAFTWMFLEGV. A disulfide bridge links Cys927 with Cys999. Topologically, residues 951–967 are cytoplasmic; sequence QLYIMLVEVFESEHSRR. The chain crosses the membrane as a helical span at residues 968–990; it reads KYFYLVGYGMPALIVAVSAAVDY. Topologically, residues 991-1005 are extracellular; it reads RSYGTDKVCWLRLDT. A helical membrane pass occupies residues 1006–1027; the sequence is YFIWSFIGPATLIIMLNVIFLG. The Cytoplasmic segment spans residues 1028-1053; sequence IALYKMFHHTAILKPESGCLDNIKSW. A helical transmembrane segment spans residues 1054 to 1073; it reads VIGAIALLCLLGLTWAFGLM. The Extracellular segment spans residues 1074-1078; the sequence is YINES. A glycan (N-linked (GlcNAc...) asparagine) is linked at Asn1076. A helical transmembrane segment spans residues 1079-1104; it reads TVIMAYLFTIFNSLQGMFIFIFHCVL. Residues 1105 to 1447 lie on the Cytoplasmic side of the membrane; sequence QKKVRKEYGK…KGPAHLVTSL (343 aa). A disordered region spans residues 1123-1147; sequence GKSTESSIGSGKTSGSRTPGRYSTG. A Phosphoserine modification is found at Ser1164. A disordered region spans residues 1423–1447; it reads IVPPNKDGTPPEGSSKGPAHLVTSL. Residues 1442–1447 carry the PDZ-binding motif; it reads HLVTSL.

Belongs to the G-protein coupled receptor 2 family. LN-TM7 subfamily. Heterodimer of 2 chains generated by proteolytic processing; the large extracellular N-terminal fragment and the membrane-bound C-terminal fragment predominantly remain associated and non-covalently linked. Interacts (via olfactomedin-like domain) with FLRT1 (via extracellular domain). Interacts (via olfactomedin-like domain) with FLRT2 (via extracellular domain). Interacts (via olfactomedin-like domain) with FLRT3 (via extracellular domain); the interaction is direct. Interacts (via extracellular domain) with TENM1. Interacts (via extracellular domain) with TENM2. Interacts (via extracellular domain) with TENM3. Identified in a complex with FLRT3 and UNC5B; does not interact with UNC5B by itself. Identified in a complex with FLRT3 and UNC5D; does not interact with UNC5D by itself. As to quaternary structure, interacts (via PDZ-binding motif) with SHANK3. Interacts (via PDZ-binding motif) with DLG4. Autoproteolytically processed at the GPS region of the GAIN-B domain; this cleavage modulates receptor activity.

The protein resides in the cell membrane. Its subcellular location is the postsynaptic cell membrane. The protein localises to the cell projection. It is found in the axon. It localises to the cell junction. Its activity is regulated as follows. Forms a heterodimer of 2 chains generated by proteolytic processing that remain associated through non-covalent interactions mediated by the GAIN-B domain. In the inactivated receptor, the Stachel sequence (also named stalk) is embedded in the GAIN-B domain, where it adopts a beta-strand conformation. On activation, the Stachel moves into the 7 transmembrane region and adopts a twisted hook-shaped configuration that forms contacts within the receptor, leading to coupling of a G-alpha protein, which activates signaling. The cleaved GAIN-B and N-terminal domains can then dissociate from the rest of the receptor. Functionally, orphan adhesion G-protein coupled receptor (aGPCR), which mediates synapse specificity. Ligand binding causes a conformation change that triggers signaling via guanine nucleotide-binding proteins (G proteins) and modulates the activity of downstream effectors. ADGRL3 is coupled with different classes of G alpha proteins, such as G(12)/G(13), G(s), G(i) or G(q), depending on the context. Coupling to G(12)/G(13) G proteins, which mediates the activation Rho small GTPases is the most efficient. Following G-protein coupled receptor activation, associates with cell adhesion molecules that are expressed at the surface of adjacent cells to direct synapse specificity. Specifically mediates the establishment of Schaffer-collateral synapses formed by CA3-region axons on CA1-region pyramidal neurons in the hippocampus. Localizes to postsynaptic spines in excitatory synapses in the S.oriens and S.radiatum and interacts with presynaptic cell adhesion molecules FLRT3 and TENM2, promoting synapse formation. Plays a role in the development of glutamatergic synapses in the cortex. Important in determining the connectivity rates between the principal neurons in the cortex. Orphan adhesion G-protein coupled receptor (aGPCR), which mediates synapse specificity. Ligand binding causes a conformation change that triggers signaling via guanine nucleotide-binding proteins (G proteins) and modulates the activity of downstream effectors, such as adenylate cyclase. Isoform 1 is specifically coupled to G(s) G proteins and mediates activation of adenylate cyclase activity. Following G-protein coupled receptor activation, undergoes liquid-liquid phase transition, associates with (1) cell adhesion molecules that are expressed at the surface of adjacent cells, as well as (2) PDZ-containing proteins, such as SHANK3 and DLG4, in the cytoplasm to direct synapse formation. The polypeptide is Adhesion G protein-coupled receptor L3 (Homo sapiens (Human)).